A 347-amino-acid polypeptide reads, in one-letter code: DNA-directed RNA polymerase subunit alpha (347 aa).

Positions 1 to 243 are alpha N-terminal domain (alpha-NTD); sequence MLIKQGDRLI…DQISVFINFD (243 aa). Residues 260-347 are alpha C-terminal domain (alpha-CTD); sequence VNENLFKGID…EWKRKQQNEA (88 aa).

The protein belongs to the RNA polymerase alpha chain family. Homodimer. The RNAP catalytic core consists of 2 alpha, 1 beta, 1 beta' and 1 omega subunit. When a sigma factor is associated with the core the holoenzyme is formed, which can initiate transcription.

The enzyme catalyses RNA(n) + a ribonucleoside 5'-triphosphate = RNA(n+1) + diphosphate. In terms of biological role, DNA-dependent RNA polymerase catalyzes the transcription of DNA into RNA using the four ribonucleoside triphosphates as substrates. The sequence is that of DNA-directed RNA polymerase subunit alpha from Nitratidesulfovibrio vulgaris (strain DSM 19637 / Miyazaki F) (Desulfovibrio vulgaris).